The chain runs to 205 residues: Regulator of G-protein signaling 4 (205 aa).

Residues C2, C12, and C95 are each lipidated (S-palmitoyl cysteine). The RGS domain maps to 62 to 178 (SLENLISHEC…LKSRFYLDLV (117 aa)).

Post-translationally, palmitoylated on Cys-2 and/or Cys-12. In terms of processing, phosphorylated by cyclic GMP-dependent protein kinase. In terms of tissue distribution, expressed in brain and heart. Expressed in brain at protein level. Expressed in prefontal and visual cortex. Isoform 4 and isoform 5 are expressed ubiquitously. Isoform 1, isoform 2 and isoform 3 are not expressed in the cerebellum.

Functionally, inhibits signal transduction by increasing the GTPase activity of G protein alpha subunits thereby driving them into their inactive GDP-bound form. Activity on G(z)-alpha is inhibited by phosphorylation of the G-protein. Activity on G(z)-alpha and G(i)-alpha-1 is inhibited by palmitoylation of the G-protein. This is Regulator of G-protein signaling 4 (RGS4) from Homo sapiens (Human).